We begin with the raw amino-acid sequence, 317 residues long: Transaldolase (317 aa).

The active-site Schiff-base intermediate with substrate is the Lys-126.

It belongs to the transaldolase family. Type 1 subfamily. As to quaternary structure, homodimer.

The protein localises to the cytoplasm. The catalysed reaction is D-sedoheptulose 7-phosphate + D-glyceraldehyde 3-phosphate = D-erythrose 4-phosphate + beta-D-fructose 6-phosphate. The protein operates within carbohydrate degradation; pentose phosphate pathway; D-glyceraldehyde 3-phosphate and beta-D-fructose 6-phosphate from D-ribose 5-phosphate and D-xylulose 5-phosphate (non-oxidative stage): step 2/3. In terms of biological role, transaldolase is important for the balance of metabolites in the pentose-phosphate pathway. In Burkholderia lata (strain ATCC 17760 / DSM 23089 / LMG 22485 / NCIMB 9086 / R18194 / 383), this protein is Transaldolase.